Consider the following 328-residue polypeptide: N-acetyl-gamma-glutamyl-phosphate reductase (328 aa).

C143 is an active-site residue.

This sequence belongs to the NAGSA dehydrogenase family. Type 1 subfamily.

The protein localises to the cytoplasm. The catalysed reaction is N-acetyl-L-glutamate 5-semialdehyde + phosphate + NADP(+) = N-acetyl-L-glutamyl 5-phosphate + NADPH + H(+). Its pathway is amino-acid biosynthesis; L-arginine biosynthesis; N(2)-acetyl-L-ornithine from L-glutamate: step 3/4. Its function is as follows. Catalyzes the NADPH-dependent reduction of N-acetyl-5-glutamyl phosphate to yield N-acetyl-L-glutamate 5-semialdehyde. This Methanosphaerula palustris (strain ATCC BAA-1556 / DSM 19958 / E1-9c) protein is N-acetyl-gamma-glutamyl-phosphate reductase.